We begin with the raw amino-acid sequence, 90 residues long: Antitoxin epsilon (90 aa).

The protein belongs to the epsilon antitoxin family. In terms of assembly, in the presence of the zeta toxin, forms an inactive PezA(2)PezT(2) heterotetramer. The heterotetramer is still able to bind the zeta toxin substrate UNAG.

Functionally, antitoxin component of a type II toxin-antitoxin (TA) system. Neutralizes the toxic effect of cognate zeta toxin. Part of a postsegregational killing (PSK) system involved in the killing of plasmid-free cells. Continuous synthesis of the epsilon antitoxin is required to counteract the zeta toxin. The protein is Antitoxin epsilon of Streptococcus pyogenes.